A 37-amino-acid polypeptide reads, in one-letter code: Large ribosomal subunit protein bL36 (37 aa).

This sequence belongs to the bacterial ribosomal protein bL36 family.

This Mycoplasma sp protein is Large ribosomal subunit protein bL36 (rpmJ).